Here is a 439-residue protein sequence, read N- to C-terminus: MSGASDFLSKGIDLVQKAIDADTATRYEEAYKLYYNGLDYLMLAIKYEKNPKSKELVKSKFTEYLTRAEQLKDHLEKQAQNKSTAESSVNGSTKAKKSNGDGNGSGDDNDDADTKKLRGALAGAILSEKPNVKWSDIAGLDAAKEALKEAVILPVKFPQLFVGNRKPTSGILLYGPPGTGKSYLAKAVATEANSTFFSVSSSDLVSKWMGESERLVKQLFTMARENKPSIIFIDEVDALCGPRGEGESEASRRIKTELLVQMNGVGNDSQGVLVLGATNIPWQLDAAVRRRFERRIYIALPDVEARTRMFEINIGDVPCECTPHDYRTLAEMTDGYSGHDVAVVVRDALMQPIRKIQQATHFKPVIDETDGKEKLTPCSPGDEGAREMNWMDLATDELKEPPLTIKDFIKAIKNNRPTVNEADIAQHVKFTEDFGQEGN.

Residues 8–75 (LSKGIDLVQK…TRAEQLKDHL (68 aa)) enclose the MIT domain. Residues 76–113 (EKQAQNKSTAESSVNGSTKAKKSNGDGNGSGDDNDDAD) are disordered. The segment covering 80 to 93 (QNKSTAESSVNGST) has biased composition (polar residues). An ATP-binding site is contributed by 175-182 (GPPGTGKS).

Belongs to the AAA ATPase family. Monomer or homodimer (in nucleotide-free form). Decamer, dodecamer or tetradecamer of two stacked respective homooligomeric rings (when bound to ATP); the dodecameric form seems to be predominant.

It localises to the endosome membrane. Functionally, pre-vacuolar protein sorting protein involved in the transport of biosynthetic membrane proteins from the prevacuolar/endosomal compartment to the vacuole. Required for multivesicular body (MVB) protein sorting. Catalyzes the ATP-dependent dissociation of class E VPS proteins from endosomal membranes, such as the disassembly of the ESCRT-III complex. Required for extracellular secretion of the secreted aspartyl proteases SAP2, SAP4, SAP5, and SAP6. Its regulation of the pre-vacuolar secretory pathway is critical for virulence. The polypeptide is Vacuolar protein sorting-associated protein 4 (Candida albicans (strain SC5314 / ATCC MYA-2876) (Yeast)).